Consider the following 286-residue polypeptide: Prohibitin-2, mitochondrial (286 aa).

Over 1-13 the chain is Mitochondrial matrix; sequence MSFNKVPNIPGAP. The chain crosses the membrane as a helical; Signal-anchor for type II membrane protein span at residues 14–32; the sequence is ALSALLKVSVIGGLGVYAL. The Mitochondrial intermembrane segment spans residues 33 to 286; that stretch reads TNSLYNVDGG…LQEMNLEPKK (254 aa). Residues 186–219 adopt a coiled-coil conformation; sequence KEFTAAIEAKQVAAQEAERAKFIVEKAEQDRRSA.

Belongs to the prohibitin family. As to quaternary structure, component of a prohibitin multimeric complex in mitochondrial membranes. Mostly expressed in proliferative tissues, including vasculature, shoot and root apical tissues.

The protein localises to the mitochondrion inner membrane. Prohibitin probably acts as a holdase/unfoldase for the stabilization of newly synthesized mitochondrial proteins. In Arabidopsis thaliana (Mouse-ear cress), this protein is Prohibitin-2, mitochondrial (PHB2).